Here is a 454-residue protein sequence, read N- to C-terminus: UPF0210 protein Cphy_2797 (454 aa).

Belongs to the UPF0210 family. As to quaternary structure, homodimer.

In Lachnoclostridium phytofermentans (strain ATCC 700394 / DSM 18823 / ISDg) (Clostridium phytofermentans), this protein is UPF0210 protein Cphy_2797.